The primary structure comprises 169 residues: S-ribosylhomocysteine lyase (169 aa).

Fe cation-binding residues include H54, H58, and C128.

The protein belongs to the LuxS family. In terms of assembly, homodimer. Fe cation serves as cofactor.

The enzyme catalyses S-(5-deoxy-D-ribos-5-yl)-L-homocysteine = (S)-4,5-dihydroxypentane-2,3-dione + L-homocysteine. Involved in the synthesis of autoinducer 2 (AI-2) which is secreted by bacteria and is used to communicate both the cell density and the metabolic potential of the environment. The regulation of gene expression in response to changes in cell density is called quorum sensing. Catalyzes the transformation of S-ribosylhomocysteine (RHC) to homocysteine (HC) and 4,5-dihydroxy-2,3-pentadione (DPD). The polypeptide is S-ribosylhomocysteine lyase (Shewanella oneidensis (strain ATCC 700550 / JCM 31522 / CIP 106686 / LMG 19005 / NCIMB 14063 / MR-1)).